Consider the following 160-residue polypeptide: Phosphopantetheine adenylyltransferase (160 aa).

Thr10 is a binding site for substrate. Residues 10-11 (TF) and His18 contribute to the ATP site. Residues Lys42, Leu74, and Arg88 each contribute to the substrate site. ATP-binding positions include 89 to 91 (GLR), Glu99, and 124 to 130 (NSFISST).

This sequence belongs to the bacterial CoaD family. Homohexamer. Mg(2+) is required as a cofactor.

The protein resides in the cytoplasm. The enzyme catalyses (R)-4'-phosphopantetheine + ATP + H(+) = 3'-dephospho-CoA + diphosphate. It functions in the pathway cofactor biosynthesis; coenzyme A biosynthesis; CoA from (R)-pantothenate: step 4/5. In terms of biological role, reversibly transfers an adenylyl group from ATP to 4'-phosphopantetheine, yielding dephospho-CoA (dPCoA) and pyrophosphate. The protein is Phosphopantetheine adenylyltransferase of Shewanella piezotolerans (strain WP3 / JCM 13877).